The following is a 763-amino-acid chain: Ribonucleoside-diphosphate reductase subunit alpha (763 aa).

Positions 5–95 (LFVTKRNGKK…IFHLRKKAYG (91 aa)) constitute an ATP-cone domain. Residues K9, 15 to 21 (EKINLDK), T55, and K91 each bind ATP. T209 lines the GDP pocket. A disulfide bridge connects residues C225 and C462. DTTP contacts are provided by residues 232-234 (DNL), R262, and R269. N437 lines the GDP pocket. N437 functions as the Proton acceptor in the catalytic mechanism. The active-site Cysteine radical intermediate is C439. Residues E441 and 623 to 625 (ETS) each bind GDP. The active-site Proton acceptor is the E441.

Belongs to the ribonucleoside diphosphate reductase large chain family. Tetramer of two alpha and two beta subunits.

The enzyme catalyses a 2'-deoxyribonucleoside 5'-diphosphate + [thioredoxin]-disulfide + H2O = a ribonucleoside 5'-diphosphate + [thioredoxin]-dithiol. Under complex allosteric control mediated by deoxynucleoside triphosphates and ATP binding to separate specificity and activation sites on the alpha subunit. The type of nucleotide bound at the specificity site determines substrate preference. It seems probable that ATP makes the enzyme reduce CDP and UDP, dGTP favors ADP reduction and dTTP favors GDP reduction. Stimulated by ATP and inhibited by dATP binding to the activity site. Its function is as follows. Provides the precursors necessary for DNA synthesis. Catalyzes the biosynthesis of deoxyribonucleotides from the corresponding ribonucleotides. The protein is Ribonucleoside-diphosphate reductase subunit alpha (nrdA) of Buchnera aphidicola subsp. Schizaphis graminum (strain Sg).